The primary structure comprises 542 residues: CTP synthase (542 aa).

An amidoligase domain region spans residues 1–265; it reads MTRYVFITGG…DREVLALFGI (265 aa). Residue S13 participates in CTP binding. S13 contacts UTP. Residues 14-19 and D71 contribute to the ATP site; that span reads SLGKGL. Mg(2+)-binding residues include D71 and E139. Residues 146–148, 186–191, and K222 each bind CTP; these read DIE and KTKPTQ. Residues 186 to 191 and K222 contribute to the UTP site; that span reads KTKPTQ. Position 238–240 (238–240) interacts with ATP; it reads RDV. A Glutamine amidotransferase type-1 domain is found at 291–541; that stretch reads SIAIVGKYTG…IGAAVVQSRL (251 aa). Position 353 (G353) interacts with L-glutamine. C380 acts as the Nucleophile; for glutamine hydrolysis in catalysis. L-glutamine is bound by residues 381–384, E404, and R469; that span reads FGMQ. Catalysis depends on residues H514 and E516.

The protein belongs to the CTP synthase family. As to quaternary structure, homotetramer.

It catalyses the reaction UTP + L-glutamine + ATP + H2O = CTP + L-glutamate + ADP + phosphate + 2 H(+). The catalysed reaction is L-glutamine + H2O = L-glutamate + NH4(+). The enzyme catalyses UTP + NH4(+) + ATP = CTP + ADP + phosphate + 2 H(+). The protein operates within pyrimidine metabolism; CTP biosynthesis via de novo pathway; CTP from UDP: step 2/2. Allosterically activated by GTP, when glutamine is the substrate; GTP has no effect on the reaction when ammonia is the substrate. The allosteric effector GTP functions by stabilizing the protein conformation that binds the tetrahedral intermediate(s) formed during glutamine hydrolysis. Inhibited by the product CTP, via allosteric rather than competitive inhibition. Catalyzes the ATP-dependent amination of UTP to CTP with either L-glutamine or ammonia as the source of nitrogen. Regulates intracellular CTP levels through interactions with the four ribonucleotide triphosphates. In Methylobacterium nodulans (strain LMG 21967 / CNCM I-2342 / ORS 2060), this protein is CTP synthase.